We begin with the raw amino-acid sequence, 455 residues long: Beta-cyclopiazonate dehydrogenase (455 aa).

A signal peptide spans 1 to 25; sequence MAVRIARFLGLSTVAYLALANGIDA.

This sequence belongs to the beta-cyclopiazonate dehydrogenase family. FAD serves as cofactor.

It catalyses the reaction beta-cyclopiazonate + A = alpha-cyclopiazonate + AH2. Functionally, beta-cyclopiazonate dehydrogenase involved in the synthesis of the fungal neurotoxin alpha-cyclopiazonic acid (CPA). CpaO carries out the dehydrogenation of beta-CPA to yield an unstable enimine product, which is captured by intramolecular cyclization to create the pentacyclic fused scaffold of alpha-cyclopiazonate. The polypeptide is Beta-cyclopiazonate dehydrogenase (Aspergillus oryzae (strain ATCC 42149 / RIB 40) (Yellow koji mold)).